Consider the following 241-residue polypeptide: Small ribosomal subunit protein uS2 (241 aa).

The protein belongs to the universal ribosomal protein uS2 family.

The protein is Small ribosomal subunit protein uS2 of Yersinia enterocolitica serotype O:8 / biotype 1B (strain NCTC 13174 / 8081).